A 283-amino-acid polypeptide reads, in one-letter code: Elongation factor Ts (283 aa).

The tract at residues 80-83 (TDFV) is involved in Mg(2+) ion dislocation from EF-Tu.

The protein belongs to the EF-Ts family.

Its subcellular location is the cytoplasm. In terms of biological role, associates with the EF-Tu.GDP complex and induces the exchange of GDP to GTP. It remains bound to the aminoacyl-tRNA.EF-Tu.GTP complex up to the GTP hydrolysis stage on the ribosome. This is Elongation factor Ts from Pectobacterium carotovorum subsp. carotovorum (strain PC1).